The sequence spans 367 residues: Cyclic AMP-responsive element-binding protein 3-like protein 4 (367 aa).

The segment at 1-52 (MELGCPELLEPPEDIFSTGSFLELGFNGPPSKVPGLQKSESDDFLNLFIDPN) is required for transcriptional activation. At 1 to 267 (MELGCPELLE…QTSSRAAQTS (267 aa)) the chain is on the cytoplasmic side. Residues 58–81 (ETSPGSDSGVSEDPGSPAPQAPSS) are disordered. Positions 189–252 (ILKKIRRKIR…ISLVAQVHQL (64 aa)) constitute a bZIP domain. A basic motif region spans residues 191–230 (KKIRRKIRNKQSAQDSRRRKKEYIDGLESRVAACSEQNQK). The segment at 231 to 252 (LQRKVQELERQNISLVAQVHQL) is leucine-zipper. The helical; Signal-anchor for type II membrane protein transmembrane segment at 268 to 288 (TCVLILLFSLALIILPSFSPF) threads the bilayer. The Lumenal portion of the chain corresponds to 289–367 (QSQPEARSEG…IRGMVHADEM (79 aa)). The N-linked (GlcNAc...) asparagine glycan is linked to N338.

It belongs to the bZIP family. ATF subfamily. As to quaternary structure, binds DNA as a dimer. Forms a heterodimer with CREM isoform Delta. Post-translationally, controlled by regulated intramembrane proteolysis (RIP). Following ER stress a fragment containing the cytoplasmic transcription factor domain is released by proteolysis. The cleavage seems to be performed sequentially by site-1 and site-2 proteases (PS1 and PS2). PS1 cleavage may be suppressed by a determinant in the C-terminal region.

The protein resides in the endoplasmic reticulum membrane. The protein localises to the nucleus. In terms of biological role, transcriptional activator that may play a role in the unfolded protein response. Binds to the UPR element (UPRE) but not to CRE element. Preferentially binds DNA with to the consensus sequence 5'-T[GT]ACGT[GA][GT]-3' and has transcriptional activation activity from UPRE. Binds to NF-kappa-B site and has transcriptional activation activity from NF-kappa-B-containing regulatory elements. Increases the binding of CREM isoform Delta with CRE. The CREM isoform Delta-CREB3L4 heterodimer functions through CRE but not through UPRE and may recruit HIRA to CRE to regulate histone exchange. In Rattus norvegicus (Rat), this protein is Cyclic AMP-responsive element-binding protein 3-like protein 4 (Creb3l4).